Reading from the N-terminus, the 764-residue chain is Cyclin-F (764 aa).

The Nuclear localization signal 1 signature appears at 19 to 27 (RKRVRKRAS). An F-box domain is found at 28–75 (AVSLLSLPEELLVFVLQCLSAEDLLSVRAVHSHLCDIIDTNASIWARV). One can recognise a Cyclin N-terminal domain in the interval 307-404 (TKRYILVDWL…EVISVLDGKI (98 aa)). Positions 309–312 (RYIL) match the D box 1 motif. Positions 570 to 575 (SSKRRR) match the Nuclear localization signal 2 motif. The segment at 583-738 (RGAFVATPTA…PSQRIRRQVK (156 aa)) is PEST. The tract at residues 662-754 (CEEDEQEPPT…HSAGEAEQED (93 aa)) is disordered. Over residues 682 to 692 (SSSSTSSSSSS) the composition is skewed to low complexity. The segment covering 702-722 (SGYSSIQSFPSPTGSSALVSP) has biased composition (polar residues). The segment covering 732–742 (RIRRQVKRKNT) has biased composition (basic residues).

It belongs to the cyclin family. Cyclin AB subfamily. Component of the SCF(CCNF) complex. In terms of tissue distribution, expressed in the brain.

The protein resides in the nucleus. The protein localises to the cytoplasm. Its subcellular location is the perinuclear region. It is found in the cytoskeleton. It localises to the microtubule organizing center. The protein resides in the centrosome. The protein localises to the centriole. Substrate recognition component of a SCF (SKP1-CUL1-F-box protein) E3 ubiquitin-protein ligase complex which mediates the ubiquitination and subsequent proteasomal degradation of target proteins. The SCF(CCNF) E3 ubiquitin-protein ligase complex is an integral component of the ubiquitin proteasome system (UPS) and links proteasome degradation to the cell cycle. Mediates the substrate recognition and the proteasomal degradation of various target proteins during G2 phase involved in the regulation of cell cycle progression and in the maintenance of genome stability. May play a role in motor neuron development and axonal outgrowth. The chain is Cyclin-F (ccnf) from Danio rerio (Zebrafish).